The chain runs to 604 residues: Nuclear factor erythroid 2-related factor 2 (604 aa).

Residues 29–31 carry the DLG motif motif; that stretch reads DLG. Serine 40 is modified (phosphoserine; by PKC). The short motif at 79-82 is the ETGE motif element; it reads ETGE. Phosphoserine is present on serine 214. A disordered region spans residues 334 to 447; the sequence is TVEFNDSDSG…VPFTKDKHSS (114 aa). Composition is skewed to polar residues over residues 340 to 352 and 395 to 407; these read SDSG…SPSR and PTHS…QPLS. Lysine 461, lysine 471, and lysine 486 each carry an N-linked (Glc) (glycation) lysine glycan. A bZIP domain is found at 496 to 559; it reads LIRDIRRRGK…HLLKRKLSTL (64 aa). The N-linked (Glc) (glycation) arginine glycan is linked to arginine 498. Residues 498–517 form a basic motif region; that stretch reads RDIRRRGKNKVAAQNCRKRK. A leucine-zipper region spans residues 521-528; it reads IVELEQDL. An N-linked (Glc) (glycation) arginine glycan is attached at arginine 568. The segment at 570 to 604 is disordered; sequence EDGKPYSPSEYSLQQTRDGNVFLVPKSKKPDTKKN. Lysine 573 is a glycosylation site (N-linked (Glc) (glycation) lysine). The segment covering 578–587 has biased composition (polar residues); the sequence is SEYSLQQTRD. The mediates interaction with CHD6 and is necessary to activate transcription stretch occupies residues 590–595; it reads VFLVPK. 2 positions are modified to N6-acetyllysine; by CREBBP: lysine 595 and lysine 598.

This sequence belongs to the bZIP family. CNC subfamily. As to quaternary structure, heterodimer; heterodimerizes with small Maf proteins. Interacts (via the bZIP domain) with MAFG and MAFK; required for binding to antioxidant response elements (AREs) on DNA. Interacts with KEAP1; the interaction is direct and promotes ubiquitination by the BCR(KEAP1) E3 ubiquitin ligase complex. Forms a ternary complex with PGAM5 and KEAP1. Interacts with EEF1D at heat shock promoter elements (HSE). Interacts via its leucine-zipper domain with the coiled-coil domain of PMF1. Interacts with CHD6; involved in activation of the transcription. Interacts with ESRRB; represses NFE2L2 transcriptional activity. Interacts with MOTS-c, a peptide produced by the mitochondrially encoded 12S rRNA MT-RNR1; the interaction occurs in the nucleus following metabolic stress. In terms of processing, ubiquitinated in the cytoplasm by the BCR(KEAP1) E3 ubiquitin ligase complex leading to its degradation. In response to oxidative stress, electrophile metabolites, such as sulforaphane, modify KEAP1, leading to inhibit activity of the BCR(KEAP1) complex, promoting NFE2L2/NRF2 nuclear accumulation and activity. In response to autophagy, the BCR(KEAP1) complex is inactivated. Post-translationally, phosphorylated by EIF2AK3/PERK following unfolded protein response (UPR), promoting dissociation from its cytoplasmic inhibitor KEAP1, followed by its translocation into the nucleus. Phosphorylation of Ser-40 by PKC in response to oxidative stress dissociates NFE2L2 from its cytoplasmic inhibitor KEAP1, promoting its translocation into the nucleus. Acetylation at Lys-595 and Lys-598 increases nuclear localization whereas deacetylation by SIRT1 enhances cytoplasmic presence. In terms of processing, glycation impairs transcription factor activity by preventing heterodimerization with small Maf proteins. Deglycation by FN3K restores activity.

It is found in the cytoplasm. It localises to the cytosol. The protein localises to the nucleus. Functionally, transcription factor that plays a key role in the response to oxidative stress: binds to antioxidant response (ARE) elements present in the promoter region of many cytoprotective genes, such as phase 2 detoxifying enzymes, and promotes their expression, thereby neutralizing reactive electrophiles. In normal conditions, ubiquitinated and degraded in the cytoplasm by the BCR(KEAP1) complex. In response to oxidative stress, electrophile metabolites inhibit activity of the BCR(KEAP1) complex, promoting nuclear accumulation of NFE2L2/NRF2, heterodimerization with one of the small Maf proteins and binding to ARE elements of cytoprotective target genes. The NFE2L2/NRF2 pathway is also activated in response to selective autophagy: autophagy promotes interaction between KEAP1 and SQSTM1/p62 and subsequent inactivation of the BCR(KEAP1) complex, leading to NFE2L2/NRF2 nuclear accumulation and expression of cytoprotective genes. The NFE2L2/NRF2 pathway is also activated during the unfolded protein response (UPR), contributing to redox homeostasis and cell survival following endoplasmic reticulum stress. May also be involved in the transcriptional activation of genes of the beta-globin cluster by mediating enhancer activity of hypersensitive site 2 of the beta-globin locus control region. Also plays an important role in the regulation of the innate immune response. It is a critical regulator of the innate immune response and survival during sepsis by maintaining redox homeostasis and restraint of the dysregulation of pro-inflammatory signaling pathways like MyD88-dependent and -independent and TNF-alpha signaling. Suppresses macrophage inflammatory response by blocking pro-inflammatory cytokine transcription and the induction of IL6. Binds to the proximity of pro-inflammatory genes in macrophages and inhibits RNA Pol II recruitment. The inhibition is independent of the Nrf2-binding motif and reactive oxygen species level. Represses antiviral cytosolic DNA sensing by suppressing the expression of the adapter protein STING1 and decreasing responsiveness to STING1 agonists while increasing susceptibility to infection with DNA viruses. The chain is Nuclear factor erythroid 2-related factor 2 from Rattus norvegicus (Rat).